Consider the following 309-residue polypeptide: Large ribosomal subunit protein uL22m (309 aa).

A mitochondrion-targeting transit peptide spans 1–25 (MNFHTARISQVGVISRALLSSVSRR). Positions 40–63 (SLFGSITENKPKEGKNRGDEDAGS) are disordered. Residues 48-59 (NKPKEGKNRGDE) are compositionally biased toward basic and acidic residues.

It belongs to the universal ribosomal protein uL22 family. Component of the mitochondrial large ribosomal subunit (mt-LSU). Mature yeast 74S mitochondrial ribosomes consist of a small (37S) and a large (54S) subunit. The 37S small subunit contains a 15S ribosomal RNA (15S mt-rRNA) and 34 different proteins. The 54S large subunit contains a 21S rRNA (21S mt-rRNA) and 46 different proteins. uL22m forms the wall of the exit tunnel.

The protein resides in the mitochondrion. Its function is as follows. Component of the mitochondrial ribosome (mitoribosome), a dedicated translation machinery responsible for the synthesis of mitochondrial genome-encoded proteins, including at least some of the essential transmembrane subunits of the mitochondrial respiratory chain. The mitoribosomes are attached to the mitochondrial inner membrane and translation products are cotranslationally integrated into the membrane. This is Large ribosomal subunit protein uL22m (MRPL22) from Saccharomyces cerevisiae (strain ATCC 204508 / S288c) (Baker's yeast).